Consider the following 1575-residue polypeptide: Mediator of RNA polymerase II transcription subunit 1 (1575 aa).

The interaction with the Mediator complex and THRA stretch occupies residues 1-670; that stretch reads MKAQGETEDS…YGSSPLERQN (670 aa). The interval 16-590 is interaction with ESR1; sequence MSSLLERLHA…SIKDRHESVG (575 aa). Interaction with the Mediator complex stretches follow at residues 108–212 and 215–390; these read FYVE…GYLT and SGGH…SLQG. The tract at residues 405-644 is interaction with THRA; sequence PLILNMIRHQ…MAGNTKNHPM (240 aa). Residues 542-789 form an interaction with VDR region; sequence PASSPGYGMT…TDILSDIAEE (248 aa). Residue Ser-588 is modified to Phosphoserine. The LXXLL motif 1 motif lies at 604 to 608; that stretch reads LTSLL. Disordered regions lie at residues 609 to 706, 737 to 760, 791 to 818, 874 to 895, and 951 to 1564; these read QITG…QTED, HITPAPSQCSTPPATYPQPVSHPQ, SKLPSTSDDCPPIGTPVRDSSSSGHSQS, SQSGFGEEYFDESSQSGDNDDF, and SGSQ…GEED. A compositionally biased stretch (pro residues) spans 622–632; sequence PTPPHHTPPPV. Residues 622–701 form an interaction with GATA1 region; it reads PTPPHHTPPP…SSRVPPDKPK (80 aa). Positions 622–701 are interaction with PPARGC1A and THRA; it reads PTPPHHTPPP…SSRVPPDKPK (80 aa). Residues 645–649 carry the LXXLL motif 2 motif; sequence LMNLL. The span at 655 to 675 shows a compositional bias: polar residues; the sequence is QDFSTLYGSSPLERQNSSSGS. The tract at residues 656-1066 is interaction with ESR1; the sequence is DFSTLYGSSP…TPPIPKITIQ (411 aa). At Ser-664 the chain carries Phosphoserine. Over residues 696-706 the composition is skewed to basic and acidic residues; sequence PPDKPKHQTED. A Phosphoserine modification is found at Ser-795. Thr-805 bears the Phosphothreonine mark. Residues 808 to 818 are compositionally biased toward polar residues; the sequence is RDSSSSGHSQS. The Integrase domain-binding motif (IBM) signature appears at 875–902; that stretch reads QSGFGEEYFDESSQSGDNDDFKGFASQA. Phosphoserine occurs at positions 887, 953, and 955. Residues 963–974 show a composition bias toward basic and acidic residues; it reads LGKEKTQKRVKE. The span at 976–986 shows a compositional bias: gly residues; that stretch reads NGTGASSGSGP. At Thr-1032 the chain carries Phosphothreonine; by MAPK1 or MAPK3. The span at 1034–1051 shows a compositional bias: low complexity; that stretch reads PTSTGGSKSPGSSGRSQT. 2 positions are modified to phosphothreonine: Thr-1051 and Thr-1057. Composition is skewed to low complexity over residues 1078-1094 and 1101-1152; these read SSHSQYTSSGSVSSSGS and SSSS…SQTG. Ser-1158 carries the phosphoserine modification. Residues 1158-1184 are compositionally biased toward polar residues; it reads SPITKHGLSSGSSSTKMKPQGKPSSLM. Lys-1179 carries the post-translational modification N6-acetyllysine. Residues 1185 to 1197 are compositionally biased toward low complexity; that stretch reads NPSISKPNISPSH. Ser-1209 bears the Phosphoserine mark. A Phosphothreonine modification is found at Thr-1217. 2 stretches are compositionally biased toward low complexity: residues 1220–1258 and 1265–1295; these read SSKAKSPISSGSSGSHVSGTSSSSGMKSSSGSASSGSVS and SNSCTPSSSSFSSSGSSMSSSQNQHGSSKGK. Ser-1225 is subject to Phosphoserine. The interaction with TP53 stretch occupies residues 1251-1423; that stretch reads SASSGSVSQK…KPGESGGDGL (173 aa). Residues Ser-1304 and Ser-1349 each carry the phosphoserine modification. Positions 1331-1352 are enriched in polar residues; sequence MGASTNSSNHPMSSKHNTSGGE. Basic and acidic residues predominate over residues 1354-1366; it reads QSKREKSDKDKSK. A phosphoserine mark is found at Ser-1405 and Ser-1435. Polar residues-rich tracts occupy residues 1427 to 1442 and 1450 to 1484; these read IASSKNYGSPLISGST and PSHSKSPAYTPQNVDSESESGSSIAERSYQNSPSS. Thr-1442 is modified (phosphothreonine). Thr-1459 carries the post-translational modification Phosphothreonine; by MAPK1 or MAPK3. 5 positions are modified to phosphoserine: Ser-1465, Ser-1467, Ser-1481, Ser-1483, and Ser-1484. A compositionally biased stretch (basic residues) spans 1498–1507; sequence KHKKHKKEKK. Lys-1523 carries the post-translational modification N6-acetyllysine. Positions 1527–1545 are enriched in polar residues; sequence WSKSPISSDPTASVTNNPI.

It belongs to the Mediator complex subunit 1 family. In terms of assembly, component of the Mediator complex, which is composed of MED1, MED4, MED6, MED7, MED8, MED9, MED10, MED11, MED12, MED13, MED13L, MED14, MED15, MED16, MED17, MED18, MED19, MED20, MED21, MED22, MED23, MED24, MED25, MED26, MED27, MED29, MED30, MED31, CCNC, CDK8 and CDC2L6/CDK11. The MED12, MED13, CCNC and CDK8 subunits form a distinct module termed the CDK8 module. Mediator containing the CDK8 module is less active than Mediator lacking this module in supporting transcriptional activation. Individual preparations of the Mediator complex lacking one or more distinct subunits have been variously termed ARC, CRSP, DRIP, PC2, SMCC and TRAP. This subunit specifically interacts with a number of nuclear receptors in a ligand-dependent fashion including AR, ESR1, ESR2, PPARA, PPARG, RORA, RXRA, RXRG, THRA, THRB and VDR. Interacts with CTNNB1, GABPA, GLI3, PPARGC1A and TP53. Interacts with GATA1 and YWHAH. Interacts with CLOCK; this interaction requires the presence of THRAP3. Interacts with CCAR1. Interacts with NR4A3. Interacts (via IBM motif) with PSIP1 (via IBD domain); phosphorylation increases its affinity for PSIP1. Interacts with USP22. In terms of processing, phosphorylated by MAPK1 or MAPK3 during G2/M phase which may enhance protein stability and promote entry into the nucleolus. Phosphorylation increases its interaction with PSIP1. In terms of tissue distribution, widely expressed in the adult, with high levels of expression in the liver, lung, intestinal mucosa, kidney cortex, thymic cortex, splenic follicle and seminiferous epithelium in testis. Also expressed in the adult heart, brain, spleen and skeletal muscle.

The protein localises to the nucleus. Functionally, component of the Mediator complex, a coactivator involved in the regulated transcription of nearly all RNA polymerase II-dependent genes. Mediator functions as a bridge to convey information from gene-specific regulatory proteins to the basal RNA polymerase II transcription machinery. Mediator is recruited to promoters by direct interactions with regulatory proteins and serves as a scaffold for the assembly of a functional preinitiation complex with RNA polymerase II and the general transcription factors. Essential for embryogenesis, including development of the central nervous system, heart, liver and placenta and for erythropoiesis. Also required for normal transcriptional control of thyroid-stimulating hormone beta (TSHB) in the pituitary. Acts as a coactivator for GATA1-mediated transcriptional activation during erythroid differentiation of K562 erythroleukemia cells. This is Mediator of RNA polymerase II transcription subunit 1 (Med1) from Mus musculus (Mouse).